A 218-amino-acid polypeptide reads, in one-letter code: Protein GrpE (218 aa).

A compositionally biased stretch (polar residues) spans 1 to 10 (MSGEASTPAQ). Disordered stretches follow at residues 1-44 (MSGE…DPAE) and 198-218 (SMGPGPSADAEGAASAEAEDS). Residues 200 to 218 (GPGPSADAEGAASAEAEDS) show a composition bias toward low complexity.

It belongs to the GrpE family. As to quaternary structure, homodimer.

It localises to the cytoplasm. In terms of biological role, participates actively in the response to hyperosmotic and heat shock by preventing the aggregation of stress-denatured proteins, in association with DnaK and GrpE. It is the nucleotide exchange factor for DnaK and may function as a thermosensor. Unfolded proteins bind initially to DnaJ; upon interaction with the DnaJ-bound protein, DnaK hydrolyzes its bound ATP, resulting in the formation of a stable complex. GrpE releases ADP from DnaK; ATP binding to DnaK triggers the release of the substrate protein, thus completing the reaction cycle. Several rounds of ATP-dependent interactions between DnaJ, DnaK and GrpE are required for fully efficient folding. The sequence is that of Protein GrpE from Parasynechococcus marenigrum (strain WH8102).